We begin with the raw amino-acid sequence, 270 residues long: Tryptophan synthase alpha chain (270 aa).

Active-site proton acceptor residues include Glu49 and Asp60.

It belongs to the TrpA family. In terms of assembly, tetramer of two alpha and two beta chains.

The catalysed reaction is (1S,2R)-1-C-(indol-3-yl)glycerol 3-phosphate + L-serine = D-glyceraldehyde 3-phosphate + L-tryptophan + H2O. It functions in the pathway amino-acid biosynthesis; L-tryptophan biosynthesis; L-tryptophan from chorismate: step 5/5. The alpha subunit is responsible for the aldol cleavage of indoleglycerol phosphate to indole and glyceraldehyde 3-phosphate. The polypeptide is Tryptophan synthase alpha chain (Pseudomonas syringae pv. tomato (strain ATCC BAA-871 / DC3000)).